Consider the following 428-residue polypeptide: MEELGIVTPVEKAVEEKPAVKSYASLLAQLNGTVNNNSALSNVNSDIYFKLKKLEKEYELLTLQEDYIKDEQRHLKRELKRAQEEVKRIQSVPLVIGQFLEPIDQNTGIVSSTTGMSYVVRILSTLDRELLKPSMSVALHRHSNALVDILPPDSDSSISVMGENEKPDVTYADVGGLDMQKQEIREAVELPLVQADLYEQIGIDPPRGVLLYGPPGTGKTMLVKAVANSTKAAFIRVNGSEFVHKYLGEGPRMVRDVFRLARENAPSIIFIDEVDSIATKRFDAQTGSDREVQRILIELLTQMDGFDQSTNVKVIMATNRADTLDPALLRPGRLDRKIEFPSLRDRRERRLIFGTIASKMSLAPEADLDSLIIRNDSLSGAVIAAIMQEAGLRAVRKNRYVILQSDLEEAYATQVKTDNTVDKFDFYK.

An N-acetylmethionine modification is found at methionine 1. 213 to 220 (GPPGTGKT) is an ATP binding site. A Glycyl lysine isopeptide (Lys-Gly) (interchain with G-Cter in ubiquitin) cross-link involves residue lysine 280.

The protein belongs to the AAA ATPase family. Post-translationally, N-acetylated by NAT3.

The protein resides in the cytoplasm. It localises to the nucleus. Functionally, the 26S proteasome is involved in the ATP-dependent degradation of ubiquitinated proteins. The regulatory (or ATPase) complex confers ATP dependency and substrate specificity to the 26S complex. The chain is 26S proteasome regulatory subunit 6B homolog (RPT3) from Saccharomyces cerevisiae (strain ATCC 204508 / S288c) (Baker's yeast).